The primary structure comprises 188 residues: GMP synthase [glutamine-hydrolyzing] subunit A (188 aa).

Residues 3 to 188 form the Glutamine amidotransferase type-1 domain; the sequence is KVLVVAFGGQ…FQNFVELCKR (186 aa). Cys79 serves as the catalytic Nucleophile. Active-site residues include His166 and Glu168.

In terms of assembly, heterodimer composed of a glutamine amidotransferase subunit (A) and a GMP-binding subunit (B).

It carries out the reaction XMP + L-glutamine + ATP + H2O = GMP + L-glutamate + AMP + diphosphate + 2 H(+). The protein operates within purine metabolism; GMP biosynthesis; GMP from XMP (L-Gln route): step 1/1. Catalyzes the synthesis of GMP from XMP. This Ignicoccus hospitalis (strain KIN4/I / DSM 18386 / JCM 14125) protein is GMP synthase [glutamine-hydrolyzing] subunit A.